The sequence spans 131 residues: Protein FAM107B (131 aa).

Ala2 carries the N-acetylalanine modification. The tract at residues 39–79 (MNQKRGLAPQNKPELQKVMEKRRRDQVIKQKEEEAQKKKSD) is disordered. Lys50 carries the post-translational modification N6-acetyllysine. Basic and acidic residues predominate over residues 52–79 (ELQKVMEKRRRDQVIKQKEEEAQKKKSD). Positions 61–112 (RRDQVIKQKEEEAQKKKSDLEIELLKRQQKLEQLELEKQKLQEEQENAPEFV) form a coiled coil.

This sequence belongs to the FAM107 family. As to expression, expressed in the hippocampus and hypothalamus. Expressed in the pontine nuclei and reticulotegmental nucleus. Expressed in Purkinje cell and nuclear layers of the cerebelum. Expressed in the choroid plexus. Expressed in hippocampal granule neurons of the dente gyrus.

This is Protein FAM107B from Mus musculus (Mouse).